The primary structure comprises 160 residues: UPF0262 protein BCAN_A0255 (160 aa).

Belongs to the UPF0262 family.

This Brucella canis (strain ATCC 23365 / NCTC 10854 / RM-666) protein is UPF0262 protein BCAN_A0255.